Consider the following 222-residue polypeptide: PKHD-type hydroxylase PCC8801_2196 (222 aa).

A Fe2OG dioxygenase domain is found at 78-175 (RIHSLLFSRY…RLVVVGWIES (98 aa)). Fe cation-binding residues include His-96, Asp-98, and His-156. A 2-oxoglutarate-binding site is contributed by Arg-166.

The cofactor is Fe(2+). Requires L-ascorbate as cofactor.

The protein is PKHD-type hydroxylase PCC8801_2196 of Rippkaea orientalis (strain PCC 8801 / RF-1) (Cyanothece sp. (strain PCC 8801)).